Consider the following 353-residue polypeptide: Quinolinate synthase (353 aa).

Iminosuccinate-binding residues include H47 and S68. C113 is a binding site for [4Fe-4S] cluster. Iminosuccinate is bound by residues 139–141 (YAN) and S156. C200 provides a ligand contact to [4Fe-4S] cluster. Iminosuccinate is bound by residues 226–228 (HPE) and T243. A [4Fe-4S] cluster-binding site is contributed by C297.

Belongs to the quinolinate synthase family. Type 1 subfamily. [4Fe-4S] cluster is required as a cofactor.

Its subcellular location is the cytoplasm. The enzyme catalyses iminosuccinate + dihydroxyacetone phosphate = quinolinate + phosphate + 2 H2O + H(+). It participates in cofactor biosynthesis; NAD(+) biosynthesis; quinolinate from iminoaspartate: step 1/1. Its function is as follows. Catalyzes the condensation of iminoaspartate with dihydroxyacetone phosphate to form quinolinate. The sequence is that of Quinolinate synthase from Erwinia tasmaniensis (strain DSM 17950 / CFBP 7177 / CIP 109463 / NCPPB 4357 / Et1/99).